The primary structure comprises 168 residues: Photosystem I assembly protein Ycf3 (168 aa).

TPR repeat units follow at residues 35-68 (AFTY…EIDP), 72-105 (SYIL…NPFL), and 120-153 (GEQA…TPGN).

This sequence belongs to the Ycf3 family.

The protein resides in the plastid. Its subcellular location is the chloroplast thylakoid membrane. Its function is as follows. Essential for the assembly of the photosystem I (PSI) complex. May act as a chaperone-like factor to guide the assembly of the PSI subunits. The chain is Photosystem I assembly protein Ycf3 from Lactuca sativa (Garden lettuce).